The chain runs to 78 residues: Putative membrane protein insertion efficiency factor (78 aa).

The protein belongs to the UPF0161 family.

It is found in the cell inner membrane. Functionally, could be involved in insertion of integral membrane proteins into the membrane. This Prochlorococcus marinus subsp. pastoris (strain CCMP1986 / NIES-2087 / MED4) protein is Putative membrane protein insertion efficiency factor.